The following is a 587-amino-acid chain: Synaptotagmin-3 (587 aa).

Residues 1–54 lie on the Vesicular side of the membrane; the sequence is MSGDYEDDLCRRALILVSDLCARVRDADTNDRCQEFNELRIRGYPRGPDADISV. The tract at residues 10–34 is cysteine motif; the sequence is CRRALILVSDLCARVRDADTNDRCQ. The helical transmembrane segment at 55 to 75 threads the bilayer; it reads SLLSVIVTFCGIVLLGVSLFV. The Cytoplasmic segment spans residues 76–587; the sequence is SWKLCWVPWR…KGLSEKENSE (512 aa). Residues 183 to 205 are compositionally biased toward low complexity; sequence PSQTSPELPSEGGTGSGLLLLPP. The segment at 183–258 is disordered; the sequence is PSQTSPELPS…EERPPALPLP (76 aa). Over residues 213 to 224 the composition is skewed to polar residues; that stretch reads AQSHQQVTSLAP. Residues 229 to 244 are compositionally biased toward low complexity; sequence PALPRPLTQQTLTTQA. An Omega-N-methylarginine modification is found at Arg286. C2 domains are found at residues 296–417 and 428–562; these read PCGR…PLWR and DLGE…EHWH. Residues Asp327, Asp333, Asp385, Phe386, Asp387, Ser390, Asp393, Asp459, Asp465, Asp519, and Asp521 each coordinate Ca(2+).

It belongs to the synaptotagmin family. In terms of assembly, homodimer; disulfide-linked via the cysteine motif. Can also form heterodimers with SYT6, SYT9 and SYT10. The cofactor is Ca(2+).

It localises to the cell membrane. The protein resides in the cytoplasmic vesicle. It is found in the secretory vesicle membrane. Functionally, ca(2+) sensor involved in Ca(2+)-dependent exocytosis of secretory vesicles through Ca(2+) and phospholipid binding to the C2 domain. Ca(2+) induces binding of the C2-domains to phospholipid membranes and to assembled SNARE-complexes; both actions contribute to triggering exocytosis. Plays a role in dendrite formation by melanocytes. The polypeptide is Synaptotagmin-3 (Syt3) (Mus musculus (Mouse)).